Here is a 196-residue protein sequence, read N- to C-terminus: Nodulation protein A (196 aa).

This sequence belongs to the NodA family.

Its subcellular location is the cytoplasm. N-acyltransferase required for nodulation. Acts in the production of a small, heat-stable compound (Nod) that stimulates mitosis in various plant protoplasts. The sequence is that of Nodulation protein A from Sinorhizobium terangae.